Reading from the N-terminus, the 97-residue chain is UPF0235 protein Aasi_0294 (97 aa).

The protein belongs to the UPF0235 family.

This Amoebophilus asiaticus (strain 5a2) protein is UPF0235 protein Aasi_0294.